We begin with the raw amino-acid sequence, 258 residues long: MKNHLNNNEDNSTLIKKKVLFVIAHPDDECMFFTPTIQHYNFIGSEIFVACLSNGNAVGLGKIREKELIDSCIDMGINQENVFFDQTNNFQDGMNIIWDTDLVEKTILSFIKQTSADIVISFDECGISSHPNHISISNGLKQLMKNKSSSTTTTSTTSSSSSSSSLSNRTTNNLNKEIKAYKLETVNIIRKYIGIADIPLTKLLSYDENSTQTFISTQLFPPSSYSPMTKHKSQFVWFRYLFVFLSRYSFINTLIEIK.

A disordered region spans residues 147–170 (KSSSTTTTSTTSSSSSSSSLSNRT). Low complexity predominate over residues 148 to 170 (SSSTTTTSTTSSSSSSSSLSNRT).

It belongs to the PIGL family.

The protein localises to the endoplasmic reticulum membrane. The catalysed reaction is a 6-(N-acetyl-alpha-D-glucosaminyl)-1-(1,2-diacyl-sn-glycero-3-phospho)-1D-myo-inositol + H2O = a 6-(alpha-D-glucosaminyl)-1-(1,2-diacyl-sn-glycero-3-phospho)-1D-myo-inositol + acetate. It functions in the pathway glycolipid biosynthesis; glycosylphosphatidylinositol-anchor biosynthesis. Its function is as follows. Involved in the second step of GPI biosynthesis. De-N-acetylation of N-acetylglucosaminyl-phosphatidylinositol. The chain is Probable N-acetylglucosaminyl-phosphatidylinositol de-N-acetylase (pigl) from Dictyostelium discoideum (Social amoeba).